Consider the following 2469-residue polypeptide: Large tegument protein deneddylase (2469 aa).

A deubiquitination activity region spans residues 1–237 (MDIHPLFKKL…LHGPNIDLTS (237 aa)). A Peptidase C76 domain is found at 13 to 225 (EGIASTHQAD…IMNHYRVINY (213 aa)). Active-site residues include Cys-33, Asp-163, and His-165. 2 disordered regions span residues 244-318 (EISP…ALTP) and 346-377 (HPVERTTPGTDSLLSGINSTTKREDDLEDDDN). The span at 260 to 271 (PKTPRTPKPATP) shows a compositional bias: pro residues. Residue Ser-286 is a region of interest, interaction with inner tegument protein. The segment covering 295–309 (KPPKIPKTSKKSKKV) has biased composition (basic residues). Positions 352 to 365 (TPGTDSLLSGINST) are enriched in polar residues.

This sequence belongs to the herpesviridae large tegument protein family. As to quaternary structure, interacts with host CUL1 and CUL4A; these interactions inhibit the E3 ligase activity of cullins. Interacts with inner tegument protein. Interacts with capsid vertex specific component CVC2. Interacts with the major capsid protein/MCP.

Its subcellular location is the virion tegument. It is found in the host cytoplasm. The protein resides in the host nucleus. The enzyme catalyses Thiol-dependent hydrolysis of ester, thioester, amide, peptide and isopeptide bonds formed by the C-terminal Gly of ubiquitin (a 76-residue protein attached to proteins as an intracellular targeting signal).. Its function is as follows. Large tegument protein that plays multiple roles in the viral cycle. During viral entry, remains associated with the capsid while most of the tegument is detached and participates in the capsid transport toward the host nucleus. Plays a role in the routing of the capsid at the nuclear pore complex and subsequent uncoating. Within the host nucleus, acts as a deneddylase and promotes the degradation of nuclear CRLs (cullin-RING ubiquitin ligases) and thereby stabilizes nuclear CRL substrates, while cytoplasmic CRLs remain unaffected. These modifications prevent host cell cycle S-phase progression and create a favorable environment allowing efficient viral genome replication. Participates later in the secondary envelopment of capsids. Indeed, plays a linker role for the association of the outer viral tegument to the capsids together with the inner tegument protein. This Saimiriine herpesvirus 2 (strain 11) (SaHV-2) protein is Large tegument protein deneddylase (64).